The following is a 193-amino-acid chain: Holliday junction branch migration complex subunit RuvA (193 aa).

The interval 1-64 is domain I; the sequence is MIGRIAGILL…EDANLLYGFL (64 aa). The interval 65–139 is domain II; sequence TPQERTTFRE…GKLGADLGEL (75 aa). Positions 139 to 143 are flexible linker; it reads LAGAA. The interval 144-193 is domain III; it reads SPSDHATDILNALLALGYSEKEGLAAIKNVPAGTGVSEGIKLALKALSKV.

The protein belongs to the RuvA family. Homotetramer. Forms an RuvA(8)-RuvB(12)-Holliday junction (HJ) complex. HJ DNA is sandwiched between 2 RuvA tetramers; dsDNA enters through RuvA and exits via RuvB. An RuvB hexamer assembles on each DNA strand where it exits the tetramer. Each RuvB hexamer is contacted by two RuvA subunits (via domain III) on 2 adjacent RuvB subunits; this complex drives branch migration. In the full resolvosome a probable DNA-RuvA(4)-RuvB(12)-RuvC(2) complex forms which resolves the HJ.

It is found in the cytoplasm. Functionally, the RuvA-RuvB-RuvC complex processes Holliday junction (HJ) DNA during genetic recombination and DNA repair, while the RuvA-RuvB complex plays an important role in the rescue of blocked DNA replication forks via replication fork reversal (RFR). RuvA specifically binds to HJ cruciform DNA, conferring on it an open structure. The RuvB hexamer acts as an ATP-dependent pump, pulling dsDNA into and through the RuvAB complex. HJ branch migration allows RuvC to scan DNA until it finds its consensus sequence, where it cleaves and resolves the cruciform DNA. The chain is Holliday junction branch migration complex subunit RuvA from Burkholderia lata (strain ATCC 17760 / DSM 23089 / LMG 22485 / NCIMB 9086 / R18194 / 383).